A 600-amino-acid polypeptide reads, in one-letter code: Tripeptidyl-peptidase 1 (600 aa).

The N-terminal stretch at 1 to 22 is a signal peptide; that stretch reads MNIKFNLIIIILFILFISNVNC. Residues 23–220 constitute a propeptide, removed in mature form; it reads KKIKNKKHLT…GGGGKVNGIG (198 aa). 3 N-linked (GlcNAc...) asparagine glycosylation sites follow: asparagine 91, asparagine 259, and asparagine 266. In terms of domain architecture, Peptidase S53 spans 248 to 600; sequence YLSPDLIRKE…FDELVKYCLE (353 aa). Catalysis depends on charge relay system residues glutamate 318 and aspartate 322. A disulfide bridge links cysteine 411 with cysteine 570. N-linked (GlcNAc...) asparagine glycosylation is found at asparagine 475 and asparagine 483. Residue serine 514 is the Charge relay system of the active site. The Ca(2+) site is built by aspartate 559, isoleucine 560, glycine 579, and aspartate 581.

In terms of assembly, monomer. Ca(2+) is required as a cofactor. Activated by autocatalytic proteolytical processing upon acidification. N-glycosylation is required for processing and activity.

Its subcellular location is the secreted. It catalyses the reaction Release of an N-terminal tripeptide from a polypeptide, but also has endopeptidase activity.. Functionally, serine protease with tripeptidyl-peptidase I activity. The polypeptide is Tripeptidyl-peptidase 1 (tpp1) (Dictyostelium discoideum (Social amoeba)).